The chain runs to 454 residues: Asparagine--tRNA ligase (454 aa).

This sequence belongs to the class-II aminoacyl-tRNA synthetase family. Homodimer.

The protein resides in the cytoplasm. The enzyme catalyses tRNA(Asn) + L-asparagine + ATP = L-asparaginyl-tRNA(Asn) + AMP + diphosphate + H(+). The protein is Asparagine--tRNA ligase of Ureaplasma urealyticum serovar 10 (strain ATCC 33699 / Western).